The following is a 1256-amino-acid chain: SNF2 domain-containing protein CLASSY 1 (1256 aa).

Disordered stretches follow at residues 269–290 and 448–467; these read ELRR…EIQP and GNVV…VSRE. The span at 278-290 shows a compositional bias: basic and acidic residues; it reads GRPERYGDSEIQP. Over residues 451–463 the composition is skewed to basic residues; the sequence is VHKRNGPHSRIRS. Positions 699-898 constitute a Helicase ATP-binding domain; it reads DPSSDKIGGC…FNTLCLARPK (200 aa). 712–719 is an ATP binding site; that stretch reads HTPGAGKT. The short motif at 849–852 is the DEAH box element; the sequence is DEGH. The Helicase C-terminal domain occupies 1061–1222; that stretch reads FVLNLVFRVV…EFVEDPSQWQ (162 aa).

It belongs to the helicase family. In terms of assembly, interacts with NRPD1, NRPD3 and SHH1.

The protein resides in the nucleus. The protein localises to the nucleoplasm. It localises to the nucleolus. Probable chromatin remodeling factor. Required for the initial establishment of DNA methylation and for accumulation of 24-nt siRNAs. May act on RNA templates by remodeling ribonucleoprotein structures and thereby influencing the availability of the RNA to polymerases. This is SNF2 domain-containing protein CLASSY 1 (CLSY1) from Arabidopsis thaliana (Mouse-ear cress).